The primary structure comprises 362 residues: Glutaminase-asparaginase (362 aa).

The signal sequence occupies residues 1–25; sequence MKPLLHAFAPGVMALMLLLPQAAQA. In terms of domain architecture, Asparaginase/glutaminase spans 35 to 362; that stretch reads SNVVILATGG…KELQRIFWEY (328 aa). The active-site Acyl-ester intermediate is the Thr-45. Substrate is bound by residues Ser-92 and 125–126; that span reads TD.

Belongs to the asparaginase 1 family. Homotetramer.

The protein resides in the periplasm. The catalysed reaction is L-glutamine + H2O = L-glutamate + NH4(+). It carries out the reaction L-asparagine + H2O = L-aspartate + NH4(+). The protein is Glutaminase-asparaginase (ansB) of Pseudomonas aeruginosa (strain ATCC 15692 / DSM 22644 / CIP 104116 / JCM 14847 / LMG 12228 / 1C / PRS 101 / PAO1).